The primary structure comprises 119 residues: Probable non-functional T cell receptor gamma variable 11 (119 aa).

The N-terminal stretch at 1–18 is a signal peptide; that stretch reads MPLVVAVIFFSLWVFALG. The Ig-like domain occupies 23–119; it reads PEISISRPAN…VYHCACWIRH (97 aa). Asn32 carries N-linked (GlcNAc...) asparagine glycosylation.

Most probably, the gamma-delta TR is not assembled due to incorrect folding of the gamma chain. Gamma-delta TR is a heterodimer composed of a gamma and delta chain; disulfide-linked. The gamma-delta TR is associated with the transmembrane signaling CD3 coreceptor proteins following the stoichiometry: a single gamma-delta TR heterodimer associates with one CD3D-CD3E heterodimer, one CD3G-CD3E heterodimer and one CD247 homodimer forming a stable octameric structure. Upon activation, gamma-delta TR complex associates with FCER1G to initiate intracellular signaling.

It localises to the cell membrane. In terms of biological role, probable non-functional open reading frame (ORF) of V region of the variable domain of T cell receptor (TR) gamma chain. Non-functional ORF generally cannot participate in the synthesis of a productive T cell receptor (TR) chain due to altered V-(D)-J or switch recombination and/or splicing site (at mRNA level) and/or conserved amino acid change (protein level). Gamma-delta TRs recognize a variety of self and foreign non-peptide antigens frequently expressed at the epithelial boundaries between the host and external environment, including endogenous lipids presented by MH-like protein CD1D and phosphoantigens presented by butyrophilin-like molecule BTN3A1. Upon antigen recognition induces rapid, innate-like immune responses involved in pathogen clearance and tissue repair. Binding of gamma-delta TR complex to antigen triggers phosphorylation of immunoreceptor tyrosine-based activation motifs (ITAMs) in the CD3 chains by the LCK and FYN kinases, allowing the recruitment, phosphorylation, and activation of ZAP70 that facilitates phosphorylation of the scaffolding proteins LCP2 and LAT. This lead to the formation of a supramolecular signalosome that recruits the phospholipase PLCG1, resulting in calcium mobilization and ERK activation, ultimately leading to T cell expansion and differentiation into effector cells. Gamma-delta TRs are produced through somatic rearrangement of a limited repertoire of variable (V), diversity (D), and joining (J) genes. The potential diversity of gamma-delta TRs is conferred by the unique ability to rearrange (D) genes in tandem and to utilize all three reading frames. The combinatorial diversity is considerably increased by the sequence exonuclease trimming and random nucleotide (N) region additions which occur during the V-(D)-J rearrangements. This Homo sapiens (Human) protein is Probable non-functional T cell receptor gamma variable 11.